We begin with the raw amino-acid sequence, 132 residues long: MSSVSASWLDEVKWDDKGLVTAIAQDAASGRVLMVAWMNRESLQLTADTGIAHYWSRSRRKLWKKGEESGHLQTVRELRLDCDGDVIVMQIEQIGGIACHTGRESCFYRRFENGGWTTVDAVLKDPRAIYHP.

Asp81 is a Mg(2+) binding site. A Zn(2+)-binding site is contributed by Cys82. Residues Asp83 and Asp85 each contribute to the Mg(2+) site. 2 residues coordinate Zn(2+): Cys99 and Cys106.

This sequence belongs to the PRA-CH family. Homodimer. Mg(2+) serves as cofactor. Requires Zn(2+) as cofactor.

The protein localises to the cytoplasm. It carries out the reaction 1-(5-phospho-beta-D-ribosyl)-5'-AMP + H2O = 1-(5-phospho-beta-D-ribosyl)-5-[(5-phospho-beta-D-ribosylamino)methylideneamino]imidazole-4-carboxamide. Its pathway is amino-acid biosynthesis; L-histidine biosynthesis; L-histidine from 5-phospho-alpha-D-ribose 1-diphosphate: step 3/9. In terms of biological role, catalyzes the hydrolysis of the adenine ring of phosphoribosyl-AMP. The protein is Phosphoribosyl-AMP cyclohydrolase of Chromobacterium violaceum (strain ATCC 12472 / DSM 30191 / JCM 1249 / CCUG 213 / NBRC 12614 / NCIMB 9131 / NCTC 9757 / MK).